The primary structure comprises 122 residues: Holo-[acyl-carrier-protein] synthase (122 aa).

Mg(2+) is bound by residues aspartate 9 and glutamate 58.

This sequence belongs to the P-Pant transferase superfamily. AcpS family. Mg(2+) serves as cofactor.

Its subcellular location is the cytoplasm. The catalysed reaction is apo-[ACP] + CoA = holo-[ACP] + adenosine 3',5'-bisphosphate + H(+). In terms of biological role, transfers the 4'-phosphopantetheine moiety from coenzyme A to a Ser of acyl-carrier-protein. The chain is Holo-[acyl-carrier-protein] synthase from Chlamydia pneumoniae (Chlamydophila pneumoniae).